The primary structure comprises 139 residues: MKPAARRKARKLAVQAIYSWQLSQNSFSDIEAQFLTENDTSKVDVDYFLELVRGVGGHYRTLDEALEPFLDRPIKELDPIELAVLRLAAYELRERVDVPYKVAINEAIELAKSFGADESHRFVNGVLDKAVDTFRPTRQ.

Belongs to the NusB family.

In terms of biological role, involved in transcription antitermination. Required for transcription of ribosomal RNA (rRNA) genes. Binds specifically to the boxA antiterminator sequence of the ribosomal RNA (rrn) operons. This is Transcription antitermination protein NusB from Idiomarina loihiensis (strain ATCC BAA-735 / DSM 15497 / L2-TR).